A 441-amino-acid chain; its full sequence is Cysteine--tRNA ligase (441 aa).

Cys-24 lines the Zn(2+) pocket. A 'HIGH' region motif is present at residues 26-36 (PTIYDYIHIGN). Residues Cys-204, His-230, and Glu-234 each coordinate Zn(2+). The 'KMSKS' region motif lies at 262–266 (KMSKS). Residue Lys-265 participates in ATP binding.

The protein belongs to the class-I aminoacyl-tRNA synthetase family. In terms of assembly, monomer. Zn(2+) serves as cofactor.

The protein resides in the cytoplasm. It catalyses the reaction tRNA(Cys) + L-cysteine + ATP = L-cysteinyl-tRNA(Cys) + AMP + diphosphate. This chain is Cysteine--tRNA ligase, found in Mesoplasma florum (strain ATCC 33453 / NBRC 100688 / NCTC 11704 / L1) (Acholeplasma florum).